The sequence spans 393 residues: NAD(P)H-quinone oxidoreductase subunit H, chloroplastic (393 aa).

Belongs to the complex I 49 kDa subunit family. NDH is composed of at least 16 different subunits, 5 of which are encoded in the nucleus.

The protein resides in the plastid. It localises to the chloroplast thylakoid membrane. The catalysed reaction is a plastoquinone + NADH + (n+1) H(+)(in) = a plastoquinol + NAD(+) + n H(+)(out). It carries out the reaction a plastoquinone + NADPH + (n+1) H(+)(in) = a plastoquinol + NADP(+) + n H(+)(out). Functionally, NDH shuttles electrons from NAD(P)H:plastoquinone, via FMN and iron-sulfur (Fe-S) centers, to quinones in the photosynthetic chain and possibly in a chloroplast respiratory chain. The immediate electron acceptor for the enzyme in this species is believed to be plastoquinone. Couples the redox reaction to proton translocation, and thus conserves the redox energy in a proton gradient. The sequence is that of NAD(P)H-quinone oxidoreductase subunit H, chloroplastic from Lepidium virginicum (Virginia pepperweed).